Reading from the N-terminus, the 165-residue chain is Nutritionally-regulated adipose and cardiac-enriched protein (165 aa).

Positions 1–47 are disordered; the sequence is MRSAARVSRSNSHPRTRHPTRENEGTTWGSQPSRTERDGDRKCPPSI. Over residues 34–43 the composition is skewed to basic and acidic residues; it reads RTERDGDRKC. A helical membrane pass occupies residues 112-132; that stretch reads GSLFLWLTLCALLGVVLVLYC.

Predominantly expressed in white adipose tissue (at protein level) and brown adipose tissue. Also detected in heart.

Its subcellular location is the cell membrane. This Mus musculus (Mouse) protein is Nutritionally-regulated adipose and cardiac-enriched protein (Nrac).